We begin with the raw amino-acid sequence, 417 residues long: Inactive cytochrome P450 76AD1 (417 aa).

The chain crosses the membrane as a helical span at residues 4 to 24; it reads ATLAMILAIWFISFHFIKLLF.

It belongs to the cytochrome P450 family.

The protein resides in the membrane. The protein operates within pigment biosynthesis; betalain biosynthesis. In terms of biological role, inactive cytochrome unable to convert L-DOPA to cyclo-DOPA in the betalain pathway and producing a yellow mutant phenotype. A frameshift replaces 108 amino acids of the active protein found in red beets (AC I3PFJ5) with 27 new residues followed by a stop codon. The sequence is that of Inactive cytochrome P450 76AD1 from Beta vulgaris (Sugar beet).